The chain runs to 233 residues: Orotidine 5'-phosphate decarboxylase (233 aa).

Substrate is bound by residues aspartate 11, lysine 34, 61–70 (DLKLHDIPNT), threonine 117, arginine 179, glutamine 188, glycine 208, and arginine 209. Catalysis depends on lysine 63, which acts as the Proton donor.

The protein belongs to the OMP decarboxylase family. Type 1 subfamily. In terms of assembly, homodimer.

It carries out the reaction orotidine 5'-phosphate + H(+) = UMP + CO2. It functions in the pathway pyrimidine metabolism; UMP biosynthesis via de novo pathway; UMP from orotate: step 2/2. Its function is as follows. Catalyzes the decarboxylation of orotidine 5'-monophosphate (OMP) to uridine 5'-monophosphate (UMP). The protein is Orotidine 5'-phosphate decarboxylase of Streptococcus pneumoniae (strain JJA).